A 114-amino-acid chain; its full sequence is UPF0102 protein HPG27_782 (114 aa).

Belongs to the UPF0102 family.

This Helicobacter pylori (strain G27) protein is UPF0102 protein HPG27_782.